The sequence spans 471 residues: Microtubule-associated tyrosine carboxypeptidase 1 (471 aa).

Disordered stretches follow at residues 1 to 40 and 76 to 116; these read MVLD…PLYP and HMRR…LRPA. H280 lines the Zn(2+) pocket. The active-site Nucleophile is the E281. H285 and E316 together coordinate Zn(2+).

Belongs to the peptidase MATCAP family. Requires Zn(2+) as cofactor.

It is found in the cytoplasm. It localises to the cytoskeleton. The enzyme catalyses C-terminal L-alpha-aminoacyl-L-glutamyl-L-glutamyl-L-tyrosyl-[tubulin] + H2O = C-terminal L-alpha-aminoacyl-L-glutamyl-L-glutamyl-[tubulin] + L-tyrosine. It catalyses the reaction C-terminal L-alpha-aminoacyl-L-glutamyl-L-glutamyl-L-phenylalanyl-[tubulin] + H2O = C-terminal L-alpha-aminoacyl-L-glutamyl-L-glutamyl-[tubulin] + L-phenylalanine. Its function is as follows. Tyrosine carboxypeptidase that removes the C-terminal tyrosine residue of alpha-tubulin, thereby regulating microtubule dynamics and function. Also able to remove the C-terminal phenylalanine residue of alpha-tubulin TUBA8. Recognizes adjacent tubulin dimers along the same protofilament. This is Microtubule-associated tyrosine carboxypeptidase 1 from Homo sapiens (Human).